We begin with the raw amino-acid sequence, 769 residues long: Calcium up-regulated protein F (769 aa).

The disordered stretch occupies residues 1-21 (MINIKDISKSSNQSEEKSLKG). Ricin B-type lectin domains are found at residues 25-145 (KTKY…WTTF) and 116-249 (QGNG…WGIN).

This sequence belongs to the cup family.

Its subcellular location is the cytoplasm. It is found in the membrane. In terms of biological role, may play an important role in stabilizing and/or regulating the cell membrane during Ca(2+) stress or certain stages of development. The sequence is that of Calcium up-regulated protein F (cupF) from Dictyostelium discoideum (Social amoeba).